Consider the following 164-residue polypeptide: Putative pre-16S rRNA nuclease (164 aa).

Belongs to the YqgF nuclease family.

Its subcellular location is the cytoplasm. In terms of biological role, could be a nuclease involved in processing of the 5'-end of pre-16S rRNA. This is Putative pre-16S rRNA nuclease from Rhizobium rhizogenes (strain K84 / ATCC BAA-868) (Agrobacterium radiobacter).